A 104-amino-acid chain; its full sequence is Large ribosomal subunit protein bL28 (104 aa).

It belongs to the bacterial ribosomal protein bL28 family.

The chain is Large ribosomal subunit protein bL28 from Wolbachia pipientis wMel.